Consider the following 54-residue polypeptide: UPF0391 membrane protein R00741 (54 aa).

2 helical membrane-spanning segments follow: residues A5–G25 and I30–L50.

This sequence belongs to the UPF0391 family.

The protein resides in the cell membrane. The chain is UPF0391 membrane protein R00741 from Rhizobium meliloti (strain 1021) (Ensifer meliloti).